The chain runs to 266 residues: Adaptin ear-binding coat-associated protein 2 (266 aa).

2 disordered regions span residues 164-191 and 244-266; these read SMKK…LPPP and GDFT…WVQF. The residue at position 181 (Ser-181) is a Phosphoserine. The short motif at 243 to 246 is the WXXF motif 1 element; that stretch reads WGDF. Low complexity predominate over residues 247–258; the sequence is TKSTGSTSSQTQ. The WXXF motif 2 motif lies at 263–266; sequence WVQF.

It belongs to the NECAP family. As to quaternary structure, interacts with AP1G1 and AP2A1 components of the adapter protein complexes AP-1 and AP-2. Interacts with the GAE domain proteins GGA1, GGA2 and GGA3.

It is found in the cytoplasmic vesicle. The protein localises to the clathrin-coated vesicle membrane. It localises to the cell membrane. Its function is as follows. Involved in endocytosis. The protein is Adaptin ear-binding coat-associated protein 2 (NECAP2) of Bos taurus (Bovine).